The following is a 207-amino-acid chain: Ras-related protein Rab-8B (207 aa).

Residues serine 17, glycine 18, valine 19, glycine 20, lysine 21, threonine 22, cysteine 23, threonine 35, serine 39, and threonine 40 each coordinate GTP. Residue threonine 22 participates in Mg(2+) binding. 2 short sequence motifs (switch) span residues 31-45 and 63-80; these read DAFNTTFISTIGIDF and DTAGQERFRTITTAYYRG. Mg(2+)-binding residues include threonine 40 and aspartate 63. Glycine 66 lines the GTP pocket. Position 72 is a phosphothreonine (threonine 72). GTP is bound by residues asparagine 121, lysine 122, aspartate 124, alanine 152, and lysine 153. Position 180 is a phosphoserine (serine 180). Cysteine 204 is modified (cysteine methyl ester). Cysteine 204 is lipidated: S-geranylgeranyl cysteine. Residues 205–207 constitute a propeptide, removed in mature form; it reads LLL.

It belongs to the small GTPase superfamily. Rab family. As to quaternary structure, associated with actin, delta-catenin and alpha and beta tubulins. Interacts with OTOF. Interacts with PEX5R. Interacts with RAB3IP. Interacts with VIM. Interacts with CDH1. Interacts with MICALL2. Interacts with GDI1, GDI2, CHML and CHM; phosphorylation at Thr-72 disrupts these interactions. Interacts with MICAL1. Mg(2+) is required as a cofactor. Phosphorylation of Thr-72 in the switch II region by LRRK2 prevents the association of RAB regulatory proteins, including CHM, CHML and RAB GDP dissociation inhibitors GDI1 and GDI2.

It is found in the cell membrane. The protein resides in the cytoplasmic vesicle. Its subcellular location is the phagosome membrane. It localises to the endosome membrane. The catalysed reaction is GTP + H2O = GDP + phosphate + H(+). Regulated by guanine nucleotide exchange factors (GEFs) including RAB3IP/RABIN8 which promotes the exchange of bound GDP for free GTP. Regulated by GTPase activating proteins (GAPs) which increase the GTP hydrolysis activity. Inhibited by GDP dissociation inhibitors (GDIs). In terms of biological role, the small GTPases Rab are key regulators of intracellular membrane trafficking, from the formation of transport vesicles to their fusion with membranes. Rabs cycle between an inactive GDP-bound form and an active GTP-bound form that is able to recruit to membranes different sets of downstream effectors directly responsible for vesicle formation, movement, tethering and fusion. RAB8B may be involved in polarized vesicular trafficking and neurotransmitter release. May participate in cell junction dynamics in Sertoli cells. May also participate in the export of a subset of neosynthesized proteins through a Rab8-Rab10-Rab11-dependent endososomal export route. This is Ras-related protein Rab-8B (RAB8B) from Pongo abelii (Sumatran orangutan).